The chain runs to 84 residues: Small ribosomal subunit protein uS17 (84 aa).

This sequence belongs to the universal ribosomal protein uS17 family. As to quaternary structure, part of the 30S ribosomal subunit.

One of the primary rRNA binding proteins, it binds specifically to the 5'-end of 16S ribosomal RNA. In Salmonella typhi, this protein is Small ribosomal subunit protein uS17.